We begin with the raw amino-acid sequence, 178 residues long: Large ribosomal subunit protein uL16 (178 aa).

This sequence belongs to the universal ribosomal protein uL16 family.

The protein is Large ribosomal subunit protein uL16 of Pyrobaculum calidifontis (strain DSM 21063 / JCM 11548 / VA1).